A 172-amino-acid polypeptide reads, in one-letter code: Pollen-specific protein-like At4g18596 (172 aa).

The signal sequence occupies residues 1–27; sequence MASKAIFFFFVSAVCLSSLAGVAIADA. Cystine bridges form between Cys41–Cys112, Cys44–Cys157, and Cys65–Cys100. N-linked (GlcNAc...) asparagine glycosylation occurs at Asn70.

It belongs to the Ole e I family.

Its subcellular location is the secreted. The sequence is that of Pollen-specific protein-like At4g18596 from Arabidopsis thaliana (Mouse-ear cress).